The chain runs to 174 residues: RxLR effector protein 207 (174 aa).

Positions 1–20 (MSKVFLLLVLSVFALVSCDA) are cleaved as a signal peptide. A RxLR-dEER motif is present at residues 46 to 62 (RMLRAQEEPTNAADEER). Positions 82-99 (VTNSKLVQSMNNKLASLT) are disordered.

It belongs to the RxLR effector family. Interacts with Nicotiana benthamiana ACD11, BPA1 (binding partner of ACD11), as well as BPA-like proteins BPL1, BPL2, BPL3 and BPL4.

It localises to the secreted. It is found in the host cell membrane. Functionally, secreted effector that activates ROS-mediated cell death in plant host and is essential for virulence. Plays a role in the transition from the biotrophic to necrotrophic stage. Associates with and promotes the degradation of Nicotiana benthamiana BPA1, BPL1, BPL2, and BPL4 to disrupt ACD11 stabilization in a 26S proteasome-dependent manner. The chain is RxLR effector protein 207 from Phytophthora capsici.